Here is a 23-residue protein sequence, read N- to C-terminus: Phospholipase A1 verutoxin-1 (23 aa).

The protein belongs to the AB hydrolase superfamily. Lipase family. Contains six disulfide bonds. As to expression, expressed by the venom gland.

It is found in the secreted. It catalyses the reaction a 1,2-diacyl-sn-glycero-3-phosphocholine + H2O = a 2-acyl-sn-glycero-3-phosphocholine + a fatty acid + H(+). It carries out the reaction 1-(9Z-octadecenoyl)-2-hexadecanoyl-sn-glycero-3-phosphocholine + H2O = 2-hexadecanoyl-sn-glycero-3-phosphocholine + (9Z)-octadecenoate + H(+). The catalysed reaction is a 1-acyl-sn-glycero-3-phosphocholine + H2O = sn-glycerol 3-phosphocholine + a fatty acid + H(+). Its pathway is phospholipid metabolism. With respect to regulation, activity is maximal in the presence of calcium. However, unlike phospholipases A2 whose catalytic activity is strictly calcium-dependent, this enzyme shows considerable catalytic activity on phosphatidylcholine emulsified in calcium free solution; the catalytic activity of VT-1 assayed in the absence of calcium ions is 18-20% of that assayed in solution containing calcium ions. Functionally, catalyzes the hydrolysis of glycerophospholipids such as phosphatidylcholine (1,2-diacyl-sn-glycero-3-phosphocholine) and has a moderate activity to hydrolyze lysoglycerophospholipids such as lysophosphatidylcholine (1-acyl-sn-glycero-3-phosphocholine), but is unable to hydrolyze sphingomyelin. Liberates the fatty acid from the sn-1 position of 1,2-diacyl-sn-glycero-3-phosphocholine mainly, indicating phospholipase activity of the A1 type. In addition to acting as an allergen, it possesses a moderate hemolytic activity on red blood cells of mice (3% of hemolysis at 3.0 ug/ml). The chain is Phospholipase A1 verutoxin-1 from Vespa velutina (Asian yellow-legged hornet).